The following is a 189-amino-acid chain: MINTNDFKTGQTIKFNNQIYQILEFLHVKPGKGAAFVRTKLRNLRTGSVIDYTFNAGIKVQPALITKIKMQFLYALEDNYIFMNTQNYEQLEINKHQLKDFLKYLYEGLLVDIIFYENDEIVGITLPDKISIKVAYTEPGAKGDTKTNSLKDAALETGLVIKVPLFINIGEKIIINTETGLYLSRDNNK.

Belongs to the elongation factor P family.

It is found in the cytoplasm. The protein operates within protein biosynthesis; polypeptide chain elongation. Its function is as follows. Involved in peptide bond synthesis. Stimulates efficient translation and peptide-bond synthesis on native or reconstituted 70S ribosomes in vitro. Probably functions indirectly by altering the affinity of the ribosome for aminoacyl-tRNA, thus increasing their reactivity as acceptors for peptidyl transferase. In Onion yellows phytoplasma (strain OY-M), this protein is Elongation factor P.